Here is a 699-residue protein sequence, read N- to C-terminus: Elongation factor G (699 aa).

The region spanning 8–290 (ERYRNIGIMA…GVIEYLPSPV (283 aa)) is the tr-type G domain. GTP-binding positions include 17–24 (AHIDAGKT), 88–92 (DTPGH), and 142–145 (NKMD).

Belongs to the TRAFAC class translation factor GTPase superfamily. Classic translation factor GTPase family. EF-G/EF-2 subfamily.

The protein resides in the cytoplasm. In terms of biological role, catalyzes the GTP-dependent ribosomal translocation step during translation elongation. During this step, the ribosome changes from the pre-translocational (PRE) to the post-translocational (POST) state as the newly formed A-site-bound peptidyl-tRNA and P-site-bound deacylated tRNA move to the P and E sites, respectively. Catalyzes the coordinated movement of the two tRNA molecules, the mRNA and conformational changes in the ribosome. The chain is Elongation factor G from Alkalilimnicola ehrlichii (strain ATCC BAA-1101 / DSM 17681 / MLHE-1).